The sequence spans 100 residues: Aspartyl/glutamyl-tRNA(Asn/Gln) amidotransferase subunit C (100 aa).

The protein belongs to the GatC family. Heterotrimer of A, B and C subunits.

It carries out the reaction L-glutamyl-tRNA(Gln) + L-glutamine + ATP + H2O = L-glutaminyl-tRNA(Gln) + L-glutamate + ADP + phosphate + H(+). The enzyme catalyses L-aspartyl-tRNA(Asn) + L-glutamine + ATP + H2O = L-asparaginyl-tRNA(Asn) + L-glutamate + ADP + phosphate + 2 H(+). Functionally, allows the formation of correctly charged Asn-tRNA(Asn) or Gln-tRNA(Gln) through the transamidation of misacylated Asp-tRNA(Asn) or Glu-tRNA(Gln) in organisms which lack either or both of asparaginyl-tRNA or glutaminyl-tRNA synthetases. The reaction takes place in the presence of glutamine and ATP through an activated phospho-Asp-tRNA(Asn) or phospho-Glu-tRNA(Gln). The sequence is that of Aspartyl/glutamyl-tRNA(Asn/Gln) amidotransferase subunit C from Rickettsia peacockii (strain Rustic).